The sequence spans 316 residues: Transcription factor MafB (316 aa).

Disordered stretches follow at residues 40 to 78 and 116 to 204; these read PDRA…SPTE and HQMP…EDRF. Low complexity predominate over residues 55–77; sequence SVSSTPISTPCSSVPSSPSFSPT. 2 stretches are compositionally biased toward basic residues: residues 130–144 and 160–172; these read GHHH…HQNH and QHPH…HHHQ. Positions 177 to 198 are enriched in low complexity; sequence PSGSSSSSQQLQNSHQQHQNSS. The basic motif stretch occupies residues 231-256; it reads RLKQKRRTLKNRGYAQSCRFKRVQQK. Residues 231-294 enclose the bZIP domain; sequence RLKQKRRTLK…DAYKIKCEKL (64 aa). Residues 259–280 are leucine-zipper; that stretch reads LENEKTQLIQQVEQLKLEVSRL.

This sequence belongs to the bZIP family. Maf subfamily. Homodimer or heterodimer with other bHLH-Zip transcription factors. Binds DNA as a homodimer or a heterodimer.

Its subcellular location is the nucleus. Its function is as follows. Acts as a transcriptional activator or repressor. Implicated in the regulation of cell-type specific gene expression and play a role in inductive events during lens development. This chain is Transcription factor MafB (mafb), found in Xenopus tropicalis (Western clawed frog).